The following is a 366-amino-acid chain: Putative agmatine deiminase (366 aa).

Cys-357 functions as the Amidino-cysteine intermediate in the catalytic mechanism.

It belongs to the agmatine deiminase family.

It carries out the reaction agmatine + H2O = N-carbamoylputrescine + NH4(+). The chain is Putative agmatine deiminase from Lactococcus lactis subsp. lactis (strain IL1403) (Streptococcus lactis).